A 149-amino-acid polypeptide reads, in one-letter code: uncharacterized protein (149 aa).

To Rhizobium NGR234A y4oM.

This is an uncharacterized protein from Sinorhizobium fredii (strain NBRC 101917 / NGR234).